A 557-amino-acid chain; its full sequence is Urocanate hydratase (557 aa).

Residues 53-54 (GG), Gln-131, 177-179 (GMG), Glu-197, Arg-202, 243-244 (NA), 264-268 (QTSAH), 274-275 (YL), and Tyr-323 contribute to the NAD(+) site. Residue Cys-411 is part of the active site. Residue Gly-493 coordinates NAD(+).

The protein belongs to the urocanase family. NAD(+) is required as a cofactor.

It is found in the cytoplasm. It carries out the reaction 4-imidazolone-5-propanoate = trans-urocanate + H2O. It functions in the pathway amino-acid degradation; L-histidine degradation into L-glutamate; N-formimidoyl-L-glutamate from L-histidine: step 2/3. Catalyzes the conversion of urocanate to 4-imidazolone-5-propionate. The sequence is that of Urocanate hydratase from Pseudomonas putida (strain GB-1).